We begin with the raw amino-acid sequence, 806 residues long: Glycerol-3-phosphate acyltransferase (806 aa).

Residues 305–310 (CHRSHM) carry the HXXXXD motif motif.

Belongs to the GPAT/DAPAT family.

Its subcellular location is the cell inner membrane. The enzyme catalyses sn-glycerol 3-phosphate + an acyl-CoA = a 1-acyl-sn-glycero-3-phosphate + CoA. It functions in the pathway phospholipid metabolism; CDP-diacylglycerol biosynthesis; CDP-diacylglycerol from sn-glycerol 3-phosphate: step 1/3. The protein is Glycerol-3-phosphate acyltransferase of Salmonella arizonae (strain ATCC BAA-731 / CDC346-86 / RSK2980).